A 50-amino-acid chain; its full sequence is MAVPKRRVSHTRSAKRRTHYKITLKKPVKDSDGSWKMPHMVNPNTGEYKN.

The span at 1–26 (MAVPKRRVSHTRSAKRRTHYKITLKK) shows a compositional bias: basic residues. The segment at 1-50 (MAVPKRRVSHTRSAKRRTHYKITLKKPVKDSDGSWKMPHMVNPNTGEYKN) is disordered.

The protein belongs to the bacterial ribosomal protein bL32 family.

In Aliarcobacter butzleri (strain RM4018) (Arcobacter butzleri), this protein is Large ribosomal subunit protein bL32.